Reading from the N-terminus, the 147-residue chain is Ras-related protein RabK2 (147 aa).

GTP contacts are provided by residues 11–15 and 63–66; these read NTHGS and TKSD. Residue cysteine 145 is the site of S-geranylgeranyl cysteine attachment.

It belongs to the small GTPase superfamily. Rab family.

It is found in the cell membrane. This is Ras-related protein RabK2 (rabK2) from Dictyostelium discoideum (Social amoeba).